Consider the following 316-residue polypeptide: MLRGWGGPSVGVCVRTALGVLCLCLTGAVEVQVSEDPVVALVDTDATLRCSFSPEPGFSLAQLNLIWQLTDTKQLVHSFTEGRDQGSAYSNRTALFPDLLVQGNASLRLQRVRVTDEGSYTCFVSIQDFDSAAVSLQVAAPYSKPSMTLEPNKDLRPGNMVTITCSSYQGYPEAEVFWKDGQGVPLTGNVTTSQMANERGLFDVHSVLRVVLGANGTYSCLVRNPVLQQDAHGSVTITGQPLTFPPEALWVTVGLSVCLVVLLVALAFVCWRKIKQSCEEENAGAEDQDGDGEGSKTALRPLKPSENKEDDGQEIA.

Positions 1–28 are cleaved as a signal peptide; that stretch reads MLRGWGGPSVGVCVRTALGVLCLCLTGA. Residues 29 to 139 enclose the Ig-like V-type domain; sequence VEVQVSEDPV…DSAAVSLQVA (111 aa). The Extracellular portion of the chain corresponds to 29–248; the sequence is VEVQVSEDPV…GQPLTFPPEA (220 aa). N-linked (GlcNAc...) asparagine glycosylation is found at Asn-104, Asn-189, and Asn-215. One can recognise an Ig-like C2-type domain in the interval 145–238; it reads PSMTLEPNKD…QDAHGSVTIT (94 aa). A disulfide bridge connects residues Cys-165 and Cys-220. Residues 249-269 form a helical membrane-spanning segment; the sequence is LWVTVGLSVCLVVLLVALAFV. At 270-316 the chain is on the cytoplasmic side; sequence CWRKIKQSCEEENAGAEDQDGDGEGSKTALRPLKPSENKEDDGQEIA. Acidic residues predominate over residues 280 to 292; that stretch reads EENAGAEDQDGDG. Positions 280–316 are disordered; it reads EENAGAEDQDGDGEGSKTALRPLKPSENKEDDGQEIA.

Belongs to the immunoglobulin superfamily. BTN/MOG family. Interacts with TREML2 and this interaction enhances T-cell activation. In terms of tissue distribution, ubiquitous.

The protein resides in the membrane. Functionally, modulates T-cell-mediated immune responses and the development of acute and chronic transplant rejection. Plays a positive regulatory role in bone formation and has a dual role in the bone-immune interface. Induces antitumor immunity as it activates both acquired and innate immunity leading to natural killer cell and CD8 T-cell dependent killing of tumor cells. This is CD276 antigen (Cd276) from Mus musculus (Mouse).